The sequence spans 512 residues: Cytochrome P450 monooxygenase astB (512 aa).

The helical transmembrane segment at 5-25 (DLSFPAAIGAVFGAVAISVAA) threads the bilayer. Position 452 (C452) interacts with heme.

This sequence belongs to the cytochrome P450 family. The cofactor is heme.

The protein resides in the membrane. It participates in secondary metabolite biosynthesis; terpenoid biosynthesis. Functionally, cytochrome P450 monooxygenase; part of the gene cluster that mediates the biosynthesis of the sesquiterpenoid aspterric acid (AA), an inhibitor of dihydroxy-acid dehydratase (DHAD) effective as an herbicide. AstB catalyzes the second step within the pathway and converts (-)-daucane produced by the terpene cyclase astA into an alpha-epoxy carboxylate intermediate which is further converted into the tricyclic aspterric acid by the cytochrome P450 monooxygenase astC. In Aspergillus terreus (strain NIH 2624 / FGSC A1156), this protein is Cytochrome P450 monooxygenase astB.